The primary structure comprises 865 residues: Leucine--tRNA ligase (865 aa).

A 'HIGH' region motif is present at residues 36–46; it reads PYPSGKIHMGH. Residues 608-612 carry the 'KMSKS' region motif; it reads KMSKS. K611 provides a ligand contact to ATP.

Belongs to the class-I aminoacyl-tRNA synthetase family.

It localises to the cytoplasm. The catalysed reaction is tRNA(Leu) + L-leucine + ATP = L-leucyl-tRNA(Leu) + AMP + diphosphate. The polypeptide is Leucine--tRNA ligase (Wolbachia sp. subsp. Brugia malayi (strain TRS)).